A 501-amino-acid chain; its full sequence is Cytokinin dehydrogenase 2 (501 aa).

The first 22 residues, 1–22, serve as a signal peptide directing secretion; it reads MANLRLMITLITVLMITKSSNG. N-linked (GlcNAc...) asparagine glycosylation is found at Asn32 and Asn51. One can recognise an FAD-binding PCMH-type domain in the interval 53–226; the sequence is TTVTPGGVIC…TRARIVLDHA (174 aa). The FAD site is built by Ala87, Gly89, and Gly91. His92 carries the pros-8alpha-FAD histidine modification. Positions 93 and 97 each coordinate FAD. An N-linked (GlcNAc...) asparagine glycan is attached at Asn107. The FAD site is built by Asp150, Thr155, Ser161, Ile165, Ile216, Tyr460, Ser495, and Gln498.

It belongs to the oxygen-dependent FAD-linked oxidoreductase family. It depends on FAD as a cofactor. Expressed in the shoot apex, in stipules, and occasionally in the most apical part of the inflorescence stems. Not detected in roots.

The protein resides in the endoplasmic reticulum. The protein localises to the secreted. Its subcellular location is the extracellular space. It catalyses the reaction N(6)-dimethylallyladenine + A + H2O = 3-methyl-2-butenal + adenine + AH2. Its function is as follows. Catalyzes the oxidation of cytokinins, a family of N(6)-substituted adenine derivatives that are plant hormones, where the substituent is an isopentenyl group. Modulates asymmetric cytokinin signaling in emerged lateral roots. Its activity determines cell elongation and number in emerged lateral roots and defines angular growth of lateral roots. The polypeptide is Cytokinin dehydrogenase 2 (CKX2) (Arabidopsis thaliana (Mouse-ear cress)).